Consider the following 736-residue polypeptide: Transcriptional repressor CTCF (736 aa).

Methionine 1 carries the N-acetylmethionine modification. Lysine 18 participates in a covalent cross-link: Glycyl lysine isopeptide (Lys-Gly) (interchain with G-Cter in SUMO2). Lysine 74 is covalently cross-linked (Glycyl lysine isopeptide (Lys-Gly) (interchain with G-Cter in SUMO)). Positions 180-211 (QGELPPQEDSSWQKDPDYQPPAKKTKKTKKSK) are disordered. The segment covering 202–211 (KKTKKTKKSK) has biased composition (basic residues). Lysine 219 participates in a covalent cross-link: Glycyl lysine isopeptide (Lys-Gly) (interchain with G-Cter in SUMO2). The segment at 266–288 (FQCELCSYTCPRRSNLDRHMKSH) adopts a C2H2-type 1 zinc-finger fold. Threonine 289 is modified (phosphothreonine). A C2H2-type 2 zinc finger spans residues 294–316 (HKCHLCGRAFRTVTLLRNHLNTH). At threonine 317 the chain carries Phosphothreonine. 2 C2H2-type zinc fingers span residues 322–345 (HKCP…RYKH) and 351–373 (FKCS…IRSH). Position 374 is a phosphothreonine (threonine 374). The segment at 379–401 (FQCSLCSYASRDTYKLKRHMRTH) adopts a C2H2-type 5 zinc-finger fold. Residue serine 402 is modified to Phosphoserine. 5 consecutive C2H2-type zinc fingers follow at residues 407–430 (YECY…LQKH), 437–460 (FHCP…RKQH), 467–489 (KKCR…QKSH), 495–517 (FKCD…KRTH), and 523–546 (YACS…KRYH). The segment at 555-577 (FVCSKCGKTFTRRNTMARHADNC) adopts a C2H2-type 11; atypical zinc-finger fold. The disordered stretch occupies residues 573 to 686 (HADNCAGPDG…TAIIQVEDQN (114 aa)). The span at 593–604 (KSKRGRKRKMRS) shows a compositional bias: basic residues. Phosphoserine is present on residues serine 609, serine 610, and serine 612. The span at 610 to 637 (SDSEENAEPDLDDNEEEEEPAVEIEPEP) shows a compositional bias: acidic residues. Positions 638 to 656 (EPQPQPPPPPQPVAPAPPP) are enriched in pro residues. A compositionally biased stretch (polar residues) spans 667–686 (RTNQPKQNQPTAIIQVEDQN). A Glycyl lysine isopeptide (Lys-Gly) (interchain with G-Cter in SUMO); alternate cross-link involves residue lysine 698. A Glycyl lysine isopeptide (Lys-Gly) (interchain with G-Cter in SUMO2); alternate cross-link involves residue lysine 698. A disordered region spans residues 699 to 726 (KEPDAEPAEGEEEEAQAATTDAPNGDLT). Residues 703–713 (AEPAEGEEEEA) are compositionally biased toward acidic residues.

It belongs to the CTCF zinc-finger protein family. As to quaternary structure, interacts with CHD8. Interacts with LLPH. Interacts with CENPE. Interacts with BRD2; promoting BRD2 recruitment to chromatin. Sumoylated on Lys-74 and Lys-698; sumoylation of CTCF contributes to the repressive function of CTCF on the MYC P2 promoter.

It localises to the nucleus. It is found in the nucleoplasm. The protein resides in the chromosome. Its subcellular location is the centromere. Chromatin binding factor that binds to DNA sequence specific sites and regulates the 3D structure of chromatin. Binds together strands of DNA, thus forming chromatin loops, and anchors DNA to cellular structures, such as the nuclear lamina. Defines the boundaries between active and heterochromatic DNA via binding to chromatin insulators, thereby preventing interaction between promoter and nearby enhancers and silencers. Plays a critical role in the epigenetic regulation. Participates in the allele-specific gene expression at the imprinted IGF2/H19 gene locus. On the maternal allele, binding within the H19 imprinting control region (ICR) mediates maternally inherited higher-order chromatin conformation to restrict enhancer access to IGF2. Mediates interchromosomal association between IGF2/H19 and WSB1/NF1 and may direct distant DNA segments to a common transcription factory. Regulates asynchronous replication of IGF2/H19. Plays a critical role in gene silencing over considerable distances in the genome. Preferentially interacts with unmethylated DNA, preventing spreading of CpG methylation and maintaining methylation-free zones. Inversely, binding to target sites is prevented by CpG methylation. Plays an important role in chromatin remodeling. Can dimerize when it is bound to different DNA sequences, mediating long-range chromatin looping. Causes local loss of histone acetylation and gain of histone methylation in the beta-globin locus, without affecting transcription. When bound to chromatin, it provides an anchor point for nucleosomes positioning. Seems to be essential for homologous X-chromosome pairing. May participate with Tsix in establishing a regulatable epigenetic switch for X chromosome inactivation. May play a role in preventing the propagation of stable methylation at the escape genes from X-inactivation. Involved in sister chromatid cohesion. Associates with both centromeres and chromosomal arms during metaphase and required for cohesin localization to CTCF sites. Plays a role in the recruitment of CENPE to the pericentromeric/centromeric regions of the chromosome during mitosis. Acts as a transcriptional repressor binding to promoters of vertebrate MYC gene and BAG1 gene. Also binds to the PLK and PIM1 promoters. Acts as a transcriptional activator of APP. Regulates APOA1/C3/A4/A5 gene cluster and controls MHC class II gene expression. Plays an essential role in oocyte and preimplantation embryo development by activating or repressing transcription. Seems to act as tumor suppressor. In Mus musculus (Mouse), this protein is Transcriptional repressor CTCF (Ctcf).